Consider the following 509-residue polypeptide: Bifunctional purine biosynthesis protein PurH (509 aa).

The 144-residue stretch at 1 to 144 (MKRALISVSD…KNYAAVTVVV (144 aa)) folds into the MGS-like domain.

This sequence belongs to the PurH family.

The enzyme catalyses (6R)-10-formyltetrahydrofolate + 5-amino-1-(5-phospho-beta-D-ribosyl)imidazole-4-carboxamide = 5-formamido-1-(5-phospho-D-ribosyl)imidazole-4-carboxamide + (6S)-5,6,7,8-tetrahydrofolate. The catalysed reaction is IMP + H2O = 5-formamido-1-(5-phospho-D-ribosyl)imidazole-4-carboxamide. It participates in purine metabolism; IMP biosynthesis via de novo pathway; 5-formamido-1-(5-phospho-D-ribosyl)imidazole-4-carboxamide from 5-amino-1-(5-phospho-D-ribosyl)imidazole-4-carboxamide (10-formyl THF route): step 1/1. Its pathway is purine metabolism; IMP biosynthesis via de novo pathway; IMP from 5-formamido-1-(5-phospho-D-ribosyl)imidazole-4-carboxamide: step 1/1. This Listeria monocytogenes serovar 1/2a (strain ATCC BAA-679 / EGD-e) protein is Bifunctional purine biosynthesis protein PurH.